A 341-amino-acid polypeptide reads, in one-letter code: D-erythrose-4-phosphate dehydrogenase (341 aa).

12-13 (RI) lines the NAD(+) pocket. Residues 154 to 156 (SCT), Arg200, 213 to 214 (TK), and Arg236 contribute to the substrate site. The active-site Nucleophile is the Cys155. Asn318 provides a ligand contact to NAD(+).

The protein belongs to the glyceraldehyde-3-phosphate dehydrogenase family. Epd subfamily. As to quaternary structure, homotetramer.

Its subcellular location is the cytoplasm. It carries out the reaction D-erythrose 4-phosphate + NAD(+) + H2O = 4-phospho-D-erythronate + NADH + 2 H(+). Its pathway is cofactor biosynthesis; pyridoxine 5'-phosphate biosynthesis; pyridoxine 5'-phosphate from D-erythrose 4-phosphate: step 1/5. Catalyzes the NAD-dependent conversion of D-erythrose 4-phosphate to 4-phosphoerythronate. The chain is D-erythrose-4-phosphate dehydrogenase from Edwardsiella ictaluri (strain 93-146).